The following is a 294-amino-acid chain: Non-selective voltage-gated ion channel VDAC2 (294 aa).

Ala-2 bears the N-acetylalanine mark. The ATP site is built by Lys-23 and Lys-31. Lys-31 is modified (N6-acetyllysine; alternate). The residue at position 31 (Lys-31) is an N6-succinyllysine; alternate. Lys-31 participates in a covalent cross-link: Glycyl lysine isopeptide (Lys-Gly) (interchain with G-Cter in ubiquitin); alternate. 2 beta stranded membrane-spanning segments follow: residues 37 to 46 (LVKLDVKTKS) and 50 to 58 (VEFSTSGSS). Residue Lys-64 forms a Glycyl lysine isopeptide (Lys-Gly) (interchain with G-Cter in ubiquitin) linkage. The beta stranded transmembrane segment at 65 to 75 (VTGTLETKYKW) threads the bilayer. A Phosphotyrosine modification is found at Tyr-78. 3 beta stranded membrane-spanning segments follow: residues 80 to 87 (LTFTEKWN), 91 to 100 (TLGTEIAIED), and 106 to 115 (LKLTFDTTFS). Thr-118 carries the post-translational modification Phosphothreonine. Residue Lys-120 is modified to N6-acetyllysine; alternate. Lys-120 is covalently cross-linked (Glycyl lysine isopeptide (Lys-Gly) (interchain with G-Cter in ubiquitin); alternate). Residue Lys-121 forms a Glycyl lysine isopeptide (Lys-Gly) (interchain with G-Cter in ubiquitin) linkage. The next 4 membrane-spanning stretches (beta stranded) occupy residues 122–131 (SGKIKSSYKR), 134–141 (INLGCDVD), 148–156 (AIHGSAVFG), and 161–169 (LAGYQMTFD). Lys-172 participates in a covalent cross-link: Glycyl lysine isopeptide (Lys-Gly) (interchain with G-Cter in ubiquitin). A run of 6 beta stranded transmembrane segments spans residues 174-186 (KLTRNNFAVGYRT), 189-196 (FQLHTNVN), 200-209 (EFGGSIYQKV), 213-222 (LDTSVNLAWT), 229-238 (RFGIAAKYQL), and 242-249 (ASISAKVN). Phosphoserine is present on Ser-251. NAD(+) is bound by residues 253–255 (LIG) and 271–275 (SALVD). Beta stranded transmembrane passes span 253–262 (LIGVGYTQTL) and 265–274 (GVKLTLSALV). Lys-277 is subject to N6-acetyllysine; alternate. Lys-277 is covalently cross-linked (Glycyl lysine isopeptide (Lys-Gly) (interchain with G-Cter in ubiquitin); alternate). The beta stranded transmembrane segment at 284 to 293 (HKLGLALELE) threads the bilayer.

This sequence belongs to the eukaryotic mitochondrial porin family. In terms of assembly, monomer, homodimer and higher order oligomers; formation of higher order structures is necessary for scramblase activity. Interacts with ARMC12 in a TBC1D21-dependent manner. Interacts with KLC3. Interacts with SPATA33. Interacts with PPP3CC in a SPATA33-dependent manner. Ubiquitinated by PRKN during mitophagy, leading to its degradation and enhancement of mitophagy. Deubiquitinated by USP30.

The protein resides in the mitochondrion outer membrane. Its subcellular location is the membrane. It carries out the reaction chloride(in) = chloride(out). The catalysed reaction is K(+)(in) = K(+)(out). The enzyme catalyses a 1,2-diacyl-sn-glycero-3-phospho-L-serine(in) = a 1,2-diacyl-sn-glycero-3-phospho-L-serine(out). It catalyses the reaction a 1,2-diacyl-sn-glycero-3-phosphocholine(in) = a 1,2-diacyl-sn-glycero-3-phosphocholine(out). It carries out the reaction a 1,2-diacyl-sn-glycero-3-phospho-(1D-myo-inositol)(in) = a 1,2-diacyl-sn-glycero-3-phospho-(1D-myo-inositol)(out). Functionally, non-selective voltage-gated ion channel that mediates the transport of anions and cations through the mitochondrion outer membrane and plasma membrane. The channel adopts an open conformation at zero mV and a closed conformation at both positive and negative potentials. There are two populations of channels; the main that functions in a lower open-state conductance with lower ion selectivity, that switch, in a voltage-dependent manner, from the open to a low-conducting 'closed' state and the other that has a normal ion selectivity in the typical high conductance, 'open' state. Binds various lipids, including the sphingolipid ceramide, the phospholipid phosphatidylcholine, and the sterols cholesterol and oxysterol. Binding of ceramide promotes the mitochondrial outer membrane permeabilization (MOMP) apoptotic pathway. In terms of biological role, catalyzes the scrambling of phospholipids across the outer mitochondrial membrane; the mechanism is unrelated to channel activity and is capable of translocating both anionic and zwitterionic phospholipids. This chain is Non-selective voltage-gated ion channel VDAC2, found in Oryctolagus cuniculus (Rabbit).